The following is a 540-amino-acid chain: Solute carrier family 22 member 7 (540 aa).

Helical transmembrane passes span 21–41 (LVLL…PIFM), 144–164 (VTST…GYLS), 172–192 (LLLV…ASVN), 202–222 (LTGS…LEWL), 232–252 (VIST…GYLI), 257–277 (WLLL…WWVP), 344–364 (VSLC…GLTL), 378–398 (LLFG…VRLV), 402–422 (LTEA…LLVS), 429–449 (ITAL…TAYL), 462–484 (TGMG…VVLL), and 488–510 (WLLL…VLLL).

Belongs to the major facilitator (TC 2.A.1) superfamily. Organic cation transporter (TC 2.A.1.19) family. In terms of tissue distribution, abundant expression in male and female kidney. In kidney, expressed at the brush border of the proximal tubule S3 segment (S3) in the outer stripe and medullary rays. In kidney, expression is higher in female than male. Also expressed in female liver.

The protein resides in the basolateral cell membrane. The protein localises to the apical cell membrane. It is found in the cell membrane. The catalysed reaction is orotate(out) + L-glutamate(in) = orotate(in) + L-glutamate(out). The enzyme catalyses 3',5'-cyclic GMP(in) = 3',5'-cyclic GMP(out). It carries out the reaction GMP(in) = GMP(out). It catalyses the reaction 2'-deoxyguanosine(in) = 2'-deoxyguanosine(out). The catalysed reaction is GDP(in) = GDP(out). The enzyme catalyses guanosine(in) = guanosine(out). It carries out the reaction GTP(in) = GTP(out). It catalyses the reaction 3',5'-cyclic AMP(in) = 3',5'-cyclic AMP(out). The catalysed reaction is creatinine(in) = creatinine(out). The enzyme catalyses prostaglandin E2(out) = prostaglandin E2(in). It carries out the reaction 2-oxoglutarate(in) = 2-oxoglutarate(out). It catalyses the reaction glutarate(in) = glutarate(out). The catalysed reaction is urate(out) = urate(in). The enzyme catalyses estrone 3-sulfate(out) = estrone 3-sulfate(in). Its function is as follows. Functions as a Na(+)-independent bidirectional multispecific transporter. Contributes to the renal and hepatic elimination of endogenous organic compounds from the systemic circulation into the urine and bile, respectively. Capable of transporting a wide range of purine and pyrimidine nucleobases, nucleosides, and nucleotides with cGMP, 2'deoxyguanosine and GMP being the preferred substrates. Functions as a pH- and chloride-independent cGMP bidirectional facilitative transporter that can regulate both intracellular and extracellular levels of cGMP and may be involved in cGMP signaling pathways. Mediates orotate/glutamate bidirectional exchange and most likely display a physiological role in hepatic release of glutamate into the blood. Involved in renal secretion and possible reabsorption of creatinine. Able to uptake prostaglandin E2 (PGE2) and may contribute to PGE2 renal excretion. Also transports alpha-ketoglutarate and urate. Unlike human hortolog, able to transport glutarate. Apart from the orotate/glutamate exchange, the counterions for the uptake of other SLC22A7/OAT2 substrates remain to be identified. The polypeptide is Solute carrier family 22 member 7 (Mus musculus (Mouse)).